The chain runs to 427 residues: UPF0229 protein YeaH (427 aa).

The span at asparagine 79–arginine 90 shows a compositional bias: basic and acidic residues. The segment at asparagine 79–glutamate 110 is disordered. Positions glutamine 92–glutamine 102 are enriched in gly residues.

It belongs to the UPF0229 family.

The sequence is that of UPF0229 protein YeaH from Salmonella paratyphi B (strain ATCC BAA-1250 / SPB7).